A 144-amino-acid chain; its full sequence is Peptide methionine sulfoxide reductase B7 (144 aa).

A MsrB domain is found at 19–140; the sequence is DEEWRAVLSP…NSVSLKFSSA (122 aa). The Zn(2+) site is built by C58, C61, C104, and C107. A disulfide bridge links C76 with C129. C129 functions as the Nucleophile in the catalytic mechanism.

Belongs to the MsrB Met sulfoxide reductase family. It depends on Zn(2+) as a cofactor.

It localises to the cytoplasm. Its subcellular location is the cytosol. It carries out the reaction L-methionyl-[protein] + [thioredoxin]-disulfide + H2O = L-methionyl-(R)-S-oxide-[protein] + [thioredoxin]-dithiol. Its function is as follows. Catalyzes the reduction of methionine sulfoxide (MetSO) to methionine in proteins. Plays a protective role against oxidative stress by restoring activity to proteins that have been inactivated by methionine oxidation. MSRB family specifically reduces the MetSO R-enantiomer. The polypeptide is Peptide methionine sulfoxide reductase B7 (MSRB7) (Arabidopsis thaliana (Mouse-ear cress)).